A 333-amino-acid chain; its full sequence is Phosphate acyltransferase (333 aa).

It belongs to the PlsX family. As to quaternary structure, homodimer. Probably interacts with PlsY.

The protein localises to the cytoplasm. The catalysed reaction is a fatty acyl-[ACP] + phosphate = an acyl phosphate + holo-[ACP]. The protein operates within lipid metabolism; phospholipid metabolism. Catalyzes the reversible formation of acyl-phosphate (acyl-PO(4)) from acyl-[acyl-carrier-protein] (acyl-ACP). This enzyme utilizes acyl-ACP as fatty acyl donor, but not acyl-CoA. This chain is Phosphate acyltransferase, found in Bacillus subtilis (strain 168).